A 239-amino-acid chain; its full sequence is UPF0173 metal-dependent hydrolase Msm_0779 (239 aa).

This sequence belongs to the UPF0173 family.

In Methanobrevibacter smithii (strain ATCC 35061 / DSM 861 / OCM 144 / PS), this protein is UPF0173 metal-dependent hydrolase Msm_0779.